Reading from the N-terminus, the 343-residue chain is tRNA-specific 2-thiouridylase MnmA 2 (343 aa).

ATP contacts are provided by residues 7 to 14 (GMSGGVDS) and L33. The active-site Nucleophile is C91. The cysteines at positions 91 and 189 are disulfide-linked. Residue G115 participates in ATP binding. The interval 139 to 141 (KDQ) is interaction with tRNA. Catalysis depends on C189, which acts as the Cysteine persulfide intermediate.

This sequence belongs to the MnmA/TRMU family.

It localises to the cytoplasm. The catalysed reaction is S-sulfanyl-L-cysteinyl-[protein] + uridine(34) in tRNA + AH2 + ATP = 2-thiouridine(34) in tRNA + L-cysteinyl-[protein] + A + AMP + diphosphate + H(+). Catalyzes the 2-thiolation of uridine at the wobble position (U34) of tRNA, leading to the formation of s(2)U34. The chain is tRNA-specific 2-thiouridylase MnmA 2 from Fusobacterium nucleatum subsp. nucleatum (strain ATCC 25586 / DSM 15643 / BCRC 10681 / CIP 101130 / JCM 8532 / KCTC 2640 / LMG 13131 / VPI 4355).